The primary structure comprises 605 residues: Acetyl-coenzyme A carboxylase carboxyl transferase subunits beta/alpha (605 aa).

The tract at residues 1-269 is acetyl-coenzyme A carboxylase carboxyl transferase subunit beta; sequence MFKGLFKKTK…QRAEFLLKHG (269 aa). The region spanning 40–306 is the CoA carboxyltransferase N-terminal domain; it reads LWEKCDSCKS…SRMLDGNDCS (267 aa). The carboxyltransferase stretch occupies residues 40–570; the sequence is LWEKCDSCKS…KNNLLKTLDN (531 aa). 4 residues coordinate Zn(2+): Cys-44, Cys-47, Cys-63, and Cys-66. The C4-type zinc finger occupies 44-66; it reads CDSCKSIIYAEDLKKNYHICHEC. An acetyl-coenzyme A carboxylase carboxyl transferase subunit alpha region spans residues 270–593; the sequence is FVDKVINRKE…YEKFRSIGRF (324 aa). A CoA carboxyltransferase C-terminal domain is found at 317–570; sequence ASAKSVEEIR…KNNLLKTLDN (254 aa).

It in the N-terminal section; belongs to the AccD/PCCB family. The protein in the C-terminal section; belongs to the AccA family. In terms of assembly, acetyl-CoA carboxylase is a heterotetramer composed of biotin carboxyl carrier protein (AccB), biotin carboxylase (AccC) and two subunits of ACCase subunit beta/alpha. It depends on Zn(2+) as a cofactor.

It localises to the cytoplasm. It catalyses the reaction N(6)-carboxybiotinyl-L-lysyl-[protein] + acetyl-CoA = N(6)-biotinyl-L-lysyl-[protein] + malonyl-CoA. Its pathway is lipid metabolism; malonyl-CoA biosynthesis; malonyl-CoA from acetyl-CoA: step 1/1. Component of the acetyl coenzyme A carboxylase (ACC) complex. Biotin carboxylase (BC) catalyzes the carboxylation of biotin on its carrier protein (BCCP) and then the CO(2) group is transferred by the transcarboxylase to acetyl-CoA to form malonyl-CoA. This Natranaerobius thermophilus (strain ATCC BAA-1301 / DSM 18059 / JW/NM-WN-LF) protein is Acetyl-coenzyme A carboxylase carboxyl transferase subunits beta/alpha (accD).